A 387-amino-acid polypeptide reads, in one-letter code: Small ribosomal subunit biogenesis GTPase RsgA (387 aa).

The 162-residue stretch at 112 to 273 folds into the CP-type G domain; it reads YDGLKPVAAN…LIDSPGVREF (162 aa). Residues 159–162 and 213–221 each bind GTP; these read NKID and GQSGVGKSS. Zn(2+)-binding residues include Cys-297, Cys-302, His-304, and Cys-310.

It belongs to the TRAFAC class YlqF/YawG GTPase family. RsgA subfamily. As to quaternary structure, monomer. Associates with 30S ribosomal subunit, binds 16S rRNA. It depends on Zn(2+) as a cofactor.

The protein resides in the cytoplasm. Functionally, one of several proteins that assist in the late maturation steps of the functional core of the 30S ribosomal subunit. Helps release RbfA from mature subunits. May play a role in the assembly of ribosomal proteins into the subunit. Circularly permuted GTPase that catalyzes slow GTP hydrolysis, GTPase activity is stimulated by the 30S ribosomal subunit. The polypeptide is Small ribosomal subunit biogenesis GTPase RsgA (Vibrio cholerae serotype O1 (strain ATCC 39315 / El Tor Inaba N16961)).